Reading from the N-terminus, the 387-residue chain is 3-ketoacyl-CoA thiolase (387 aa).

Catalysis depends on Cys91, which acts as the Acyl-thioester intermediate. Active-site proton acceptor residues include His343 and Cys373.

This sequence belongs to the thiolase-like superfamily. Thiolase family. In terms of assembly, heterotetramer of two alpha chains (FadB) and two beta chains (FadA).

Its subcellular location is the cytoplasm. The enzyme catalyses an acyl-CoA + acetyl-CoA = a 3-oxoacyl-CoA + CoA. It participates in lipid metabolism; fatty acid beta-oxidation. In terms of biological role, catalyzes the final step of fatty acid oxidation in which acetyl-CoA is released and the CoA ester of a fatty acid two carbons shorter is formed. The protein is 3-ketoacyl-CoA thiolase of Serratia proteamaculans (strain 568).